The following is a 100-amino-acid chain: uncharacterized protein (100 aa).

The segment at 78–100 (NNGNLDFKGRADERRQPVSNLRM) is disordered. Basic and acidic residues predominate over residues 84 to 93 (FKGRADERRQ).

This is an uncharacterized protein from Saccharomyces cerevisiae (strain ATCC 204508 / S288c) (Baker's yeast).